We begin with the raw amino-acid sequence, 313 residues long: Solute carrier family 35 member E3 (313 aa).

The next 10 membrane-spanning stretches (helical) occupy residues 17–37 (GLLL…WIYV), 40–60 (GFPN…GLYV), 77–97 (LLLL…SLQN), 100–120 (IGTY…IQTL), 130–147 (IRLT…NSYY), 153–173 (FLGT…QVWV), 187–206 (LLYY…VPFF), 225–245 (LMVL…YWII), 252–272 (TYNM…YVLF), and 275–295 (PLSI…LAYT).

The protein belongs to the TPT transporter family. SLC35E subfamily.

It is found in the membrane. In terms of biological role, putative transporter. This Bos taurus (Bovine) protein is Solute carrier family 35 member E3 (SLC35E3).